Here is a 352-residue protein sequence, read N- to C-terminus: Nicotinate-nucleotide--dimethylbenzimidazole phosphoribosyltransferase (352 aa).

Glu318 acts as the Proton acceptor in catalysis.

It belongs to the CobT family.

It catalyses the reaction 5,6-dimethylbenzimidazole + nicotinate beta-D-ribonucleotide = alpha-ribazole 5'-phosphate + nicotinate + H(+). The protein operates within nucleoside biosynthesis; alpha-ribazole biosynthesis; alpha-ribazole from 5,6-dimethylbenzimidazole: step 1/2. Functionally, catalyzes the synthesis of alpha-ribazole-5'-phosphate from nicotinate mononucleotide (NAMN) and 5,6-dimethylbenzimidazole (DMB). The sequence is that of Nicotinate-nucleotide--dimethylbenzimidazole phosphoribosyltransferase from Geotalea uraniireducens (strain Rf4) (Geobacter uraniireducens).